The sequence spans 122 residues: Large-conductance mechanosensitive channel (122 aa).

2 helical membrane passes run 14–34 (VLDL…VKSL) and 67–87 (GAFL…FILI).

This sequence belongs to the MscL family. As to quaternary structure, homopentamer.

Its subcellular location is the cell membrane. Its function is as follows. Channel that opens in response to stretch forces in the membrane lipid bilayer. May participate in the regulation of osmotic pressure changes within the cell. The protein is Large-conductance mechanosensitive channel of Lactococcus lactis subsp. lactis (strain IL1403) (Streptococcus lactis).